The following is a 699-amino-acid chain: MRDFLHSQQQQQRYGIRRLLVLSGESSWCEEQAMVLSSQSAGDWLWVSEHAPDSVASLPASRVRTLLGREFHHAVFDARSGVDVEALAMLSGTLRAGSWLIMLVPSWQVWSTLPDEDSLRWSEHAQPIATPHFIQHFQRQLLADDDVVLWQQGQPLVIQPLAVRSDWQPAQGEPTARQQQILHELSAAESGVFVITAPRGRGKSTLAGMLTQRSRGTCWITAPSRSATDILQQYARSDAPFWAPDALLAYCRLHGAPDVDWLLIDEVAAIPSSVLTALLPYFPRILMTTTVQGYEGTGRGFLLKFCAALPQCRVFSLDDPLRWAANDPLERVLDQALLFNEPASLHFPLNPTDGALTLPSAKLDIRTECADDWLTHPERLTWCYALLCSAHYRTSPLDLRRLMDAPGMHIASAQVAGDIRGVLWLVEEGGLSDSLAHDVWAGRRRPRGNLVAQSLAAHAGLWNAPTLRARRVSRIAVASSSRRQGIGRALIADQTREAQKQALDYLSVSFGYQPDLWAFWQSCGFQLVRIGSHLEASSGCYSAMAILPLSEAGYELAQQGSQQLARDWYWLQRMIPLNLALPQTENIERDTESIALNDDDWRELAGFAFAHRPMEASFAAICRLLIHTSLPLPALRLLAETPSEGEQTAATLGLTGKKALLKRWREETTSALIELDAQRGERWRLWVLPDDAAEDALHP.

Residues Q178, 200-209 (GRGKSTLAGM), and R322 contribute to the ATP site. Residues 408–547 (MHIASAQVAG…SGCYSAMAIL (140 aa)) enclose the N-acetyltransferase domain. Acetyl-CoA is bound by residues 475-477 (IAV) and 482-488 (RRQGIGR).

Belongs to the RNA cytidine acetyltransferase family. TmcA subfamily.

It localises to the cytoplasm. The catalysed reaction is cytidine(34) in elongator tRNA(Met) + acetyl-CoA + ATP + H2O = N(4)-acetylcytidine(34) in elongator tRNA(Met) + ADP + phosphate + CoA + H(+). In terms of biological role, catalyzes the formation of N(4)-acetylcytidine (ac(4)C) at the wobble position of tRNA(Met), by using acetyl-CoA as an acetyl donor and ATP (or GTP). This chain is tRNA(Met) cytidine acetyltransferase TmcA, found in Pectobacterium atrosepticum (strain SCRI 1043 / ATCC BAA-672) (Erwinia carotovora subsp. atroseptica).